The following is a 426-amino-acid chain: MKLQKPKGTQDILPGDAAKWQYVESVARDTFSQYNYGEIRTPMFEHYEVISRSVGDTTDIVTKEMYDFYDKGDRHITLRPEGTAPVVRSYVENKLFAPEVQKPVKLYYIGSMFRYERPQAGRLREFHQIGVECFGAANPATDVETIAMAYHLFEKLGIKDVTLHLNSLGSPESRAAYRQALIDYLTPMRDQLSKDSQRRLDENPLRVLDSKEKEDKLAVEKAPSILDYLDEESQAHFEAVKDMLEALNIPYVIDTNMVRGLDYYNHTIFEFITSVEGSDLTICAGGRYDSLVGYFGGPETPGFGFGLGLERLLMVIEKQGITLPIETEMDVYLAVLGDGANSKALELVQAIRRQGFTAERDYLGRKIKAQFKSADTFKAKLVMTLGESEVEAGKAVIKNNRSRQEVEVSFEDMMTNFANISEQLLS.

It belongs to the class-II aminoacyl-tRNA synthetase family. Homodimer.

It localises to the cytoplasm. It carries out the reaction tRNA(His) + L-histidine + ATP = L-histidyl-tRNA(His) + AMP + diphosphate + H(+). The sequence is that of Histidine--tRNA ligase from Streptococcus pyogenes serotype M18 (strain MGAS8232).